The primary structure comprises 26 residues: Delta-conotoxin Am2766 (26 aa).

3 disulfides stabilise this stretch: C1–C16, C8–C20, and C15–C24. E26 is modified (glutamic acid 1-amide).

Expressed by the venom duct.

Its subcellular location is the secreted. Its function is as follows. Delta-conotoxins bind to site 6 of voltage-gated sodium channels (Nav) and inhibit the inactivation process. In Conus amadis (Amadis cone), this protein is Delta-conotoxin Am2766.